A 373-amino-acid chain; its full sequence is Peptide chain release factor subunit 1 (373 aa).

It belongs to the eukaryotic release factor 1 family. As to quaternary structure, heterodimer of two subunits, one of which binds GTP.

The protein localises to the cytoplasm. Functionally, directs the termination of nascent peptide synthesis (translation) in response to the termination codons UAA, UAG and UGA. The polypeptide is Peptide chain release factor subunit 1 (prf1) (Aeropyrum pernix (strain ATCC 700893 / DSM 11879 / JCM 9820 / NBRC 100138 / K1)).